Reading from the N-terminus, the 278-residue chain is Large ribosomal subunit protein uL2 (278 aa).

The segment at 201-278 (HGNINDGKAG…IMRSRHQRKK (78 aa)) is disordered. Positions 210–221 (GRSRWRGKKPHV) are enriched in basic residues.

Belongs to the universal ribosomal protein uL2 family. In terms of assembly, part of the 50S ribosomal subunit. Forms a bridge to the 30S subunit in the 70S ribosome.

One of the primary rRNA binding proteins. Required for association of the 30S and 50S subunits to form the 70S ribosome, for tRNA binding and peptide bond formation. It has been suggested to have peptidyltransferase activity; this is somewhat controversial. Makes several contacts with the 16S rRNA in the 70S ribosome. The chain is Large ribosomal subunit protein uL2 from Rhizobium rhizogenes (strain K84 / ATCC BAA-868) (Agrobacterium radiobacter).